A 554-amino-acid polypeptide reads, in one-letter code: Glucose-6-phosphate isomerase (554 aa).

The active-site Proton donor is glutamate 359. Residues histidine 390 and lysine 518 contribute to the active site.

It belongs to the GPI family.

It is found in the cytoplasm. It catalyses the reaction alpha-D-glucose 6-phosphate = beta-D-fructose 6-phosphate. Its pathway is carbohydrate biosynthesis; gluconeogenesis. It functions in the pathway carbohydrate degradation; glycolysis; D-glyceraldehyde 3-phosphate and glycerone phosphate from D-glucose: step 2/4. Its function is as follows. Catalyzes the reversible isomerization of glucose-6-phosphate to fructose-6-phosphate. This chain is Glucose-6-phosphate isomerase, found in Pseudomonas savastanoi pv. phaseolicola (strain 1448A / Race 6) (Pseudomonas syringae pv. phaseolicola (strain 1448A / Race 6)).